The primary structure comprises 582 residues: Formate--tetrahydrofolate ligase (582 aa).

65–72 (TPLGEGKT) lines the ATP pocket.

Belongs to the formate--tetrahydrofolate ligase family.

The catalysed reaction is (6S)-5,6,7,8-tetrahydrofolate + formate + ATP = (6R)-10-formyltetrahydrofolate + ADP + phosphate. Its pathway is one-carbon metabolism; tetrahydrofolate interconversion. In Vibrio atlanticus (strain LGP32) (Vibrio splendidus (strain Mel32)), this protein is Formate--tetrahydrofolate ligase.